Consider the following 147-residue polypeptide: DNA base-flipping protein (147 aa).

This sequence belongs to the MGMT family. ATL subfamily. As to quaternary structure, interacts with several proteins, including UvrA, UvrD and the three subunits of the RNA polymerase.

In terms of biological role, involved in DNA damage recognition. Binds DNA containing O(6)-methylguanine and larger O(6)-alkylguanine adducts. Binds to the damaged base and flips the base out of the DNA duplex into an extrahelical conformation, which allows processing by repair proteins. Also affects the regulation of gene expression in response to alkylation. The polypeptide is DNA base-flipping protein (Thermus thermophilus (strain ATCC 27634 / DSM 579 / HB8)).